Consider the following 127-residue polypeptide: uncharacterized protein (127 aa).

This is an uncharacterized protein from Acanthamoeba polyphaga (Amoeba).